We begin with the raw amino-acid sequence, 537 residues long: O-phosphoserine--tRNA(Cys) ligase (537 aa).

Residues 186–188, 231–233, 273–274, and Asn317 each bind substrate; these read HMT, SAS, and YY.

The protein belongs to the class-II aminoacyl-tRNA synthetase family. O-phosphoseryl-tRNA(Cys) synthetase subfamily. Homotetramer. Interacts with SepCysS.

The catalysed reaction is tRNA(Cys) + O-phospho-L-serine + ATP = O-phospho-L-seryl-tRNA(Cys) + AMP + diphosphate. Catalyzes the attachment of O-phosphoserine (Sep) to tRNA(Cys). This Methanococcus maripaludis (strain C7 / ATCC BAA-1331) protein is O-phosphoserine--tRNA(Cys) ligase.